The sequence spans 57 residues: uncharacterized protein (57 aa).

The interval 1 to 57 (MPHYVVVKSPMRRRRSPRRRSPRVCYSPRRVACSPRRRSPRRRSPRRRSPRRSIVVY) is disordered. Positions 10-22 (PMRRRRSPRRRSP) are enriched in basic residues. Positions 23-34 (RVCYSPRRVACS) are enriched in low complexity. Residues 35–51 (PRRRSPRRRSPRRRSPR) are compositionally biased toward basic residues.

This is an uncharacterized protein from Acheta domesticus (House cricket).